The chain runs to 285 residues: N(G),N(G)-dimethylarginine dimethylaminohydrolase 1 (285 aa).

A2 is subject to N-acetylalanine. L30 is a binding site for substrate. S33 bears the Phosphoserine mark. Positions 73, 78, 79, 98, and 145 each coordinate substrate. H173 (proton donor) is an active-site residue. C222 is subject to S-nitrosocysteine. Substrate is bound at residue V268. At C274 the chain carries S-nitrosocysteine. The Nucleophile role is filled by C274. C274 contacts Zn(2+).

It belongs to the DDAH family. In terms of assembly, monomer. As to expression, detected in skeletal muscle, lung, heart, liver, kidney and brain (at protein level).

The enzyme catalyses N(omega),N(omega)-dimethyl-L-arginine + H2O = dimethylamine + L-citrulline. The catalysed reaction is N(omega)-methyl-L-arginine + H2O = L-citrulline + methylamine. Its activity is regulated as follows. Inhibited by zinc ions. Functionally, hydrolyzes N(G),N(G)-dimethyl-L-arginine (ADMA) and N(G)-monomethyl-L-arginine (MMA) which act as inhibitors of NOS. Has therefore a role in the regulation of nitric oxide generation. The chain is N(G),N(G)-dimethylarginine dimethylaminohydrolase 1 (Ddah1) from Mus musculus (Mouse).